Here is a 637-residue protein sequence, read N- to C-terminus: tRNA uridine 5-carboxymethylaminomethyl modification enzyme MnmG (637 aa).

Gly18–Gly23 provides a ligand contact to FAD. Residue Gly282–Phe296 coordinates NAD(+).

This sequence belongs to the MnmG family. As to quaternary structure, homodimer. Heterotetramer of two MnmE and two MnmG subunits. FAD is required as a cofactor.

The protein localises to the cytoplasm. Functionally, NAD-binding protein involved in the addition of a carboxymethylaminomethyl (cmnm) group at the wobble position (U34) of certain tRNAs, forming tRNA-cmnm(5)s(2)U34. This chain is tRNA uridine 5-carboxymethylaminomethyl modification enzyme MnmG, found in Pediococcus pentosaceus (strain ATCC 25745 / CCUG 21536 / LMG 10740 / 183-1w).